The primary structure comprises 498 residues: Galactose-1-phosphate uridylyltransferase (498 aa).

Belongs to the galactose-1-phosphate uridylyltransferase type 2 family.

It is found in the cytoplasm. The catalysed reaction is alpha-D-galactose 1-phosphate + UDP-alpha-D-glucose = alpha-D-glucose 1-phosphate + UDP-alpha-D-galactose. It participates in carbohydrate metabolism; galactose metabolism. This chain is Galactose-1-phosphate uridylyltransferase, found in Staphylococcus carnosus (strain TM300).